The sequence spans 208 residues: Putative RING finger protein 413R (208 aa).

The segment at 1 to 87 (MDAIFYPLPI…RHWSDDDSDR (87 aa)) is disordered. Residues 22 to 71 (DFQEEDFQEEDFQEEDFQEEDFQEEDEDEEDEEVNEYPSDLDDEYPDSDY) show a composition bias toward acidic residues. A compositionally biased stretch (basic and acidic residues) spans 72–82 (YDERSDRHWSD). The stretch at 83-147 (DDSDRDLDDL…KLTTLSKNLT (65 aa)) forms a coiled coil. The segment at 148-196 (CIICLTNQVQILTIPCGHLIMCNPCSLNLNNSVCTRGVNSNYEKCPKCR) adopts an RING-type zinc-finger fold.

In Acheta domesticus (House cricket), this protein is Putative RING finger protein 413R (EF2).